The following is a 444-amino-acid chain: Magnesium transporter MRS2-F (444 aa).

The disordered stretch occupies residues 128-155 (FTDMEGESSAVTSPFPALTSTTPNELEM). Polar residues predominate over residues 145–155 (LTSTTPNELEM). Residues 195 to 258 (VCLESACRSL…QKVRDELEHL (64 aa)) adopt a coiled-coil conformation. Residues 370–390 (GVMLSTATVVITAGVAVVGLF) form a helical membrane-spanning segment. Residues 391 to 393 (GMN) carry the Required for magnesium transport activity motif. Residues 415-435 (FWETTLGTIAGCTVMYIVAMG) form a helical membrane-spanning segment.

It belongs to the CorA metal ion transporter (MIT) (TC 1.A.35.5) family.

It is found in the membrane. Functionally, magnesium transporter that may mediate the influx of magnesium. The protein is Magnesium transporter MRS2-F (MRS2-F) of Oryza sativa subsp. indica (Rice).